The sequence spans 367 residues: Histidinol-phosphate aminotransferase (367 aa).

N6-(pyridoxal phosphate)lysine is present on K227.

It belongs to the class-II pyridoxal-phosphate-dependent aminotransferase family. Histidinol-phosphate aminotransferase subfamily. As to quaternary structure, homodimer. Pyridoxal 5'-phosphate is required as a cofactor.

It catalyses the reaction L-histidinol phosphate + 2-oxoglutarate = 3-(imidazol-4-yl)-2-oxopropyl phosphate + L-glutamate. It functions in the pathway amino-acid biosynthesis; L-histidine biosynthesis; L-histidine from 5-phospho-alpha-D-ribose 1-diphosphate: step 7/9. The sequence is that of Histidinol-phosphate aminotransferase from Leptospira borgpetersenii serovar Hardjo-bovis (strain JB197).